The chain runs to 403 residues: Histidine--tRNA ligase (403 aa).

Belongs to the class-II aminoacyl-tRNA synthetase family. As to quaternary structure, homodimer.

The protein localises to the cytoplasm. The enzyme catalyses tRNA(His) + L-histidine + ATP = L-histidyl-tRNA(His) + AMP + diphosphate + H(+). This chain is Histidine--tRNA ligase (hisS), found in Aquifex aeolicus (strain VF5).